Here is a 426-residue protein sequence, read N- to C-terminus: MSVKMEKIEKNTVELEVTVDAKVFSAAVTKAAKALANKVNIPGFRKGKAPRTMVERYVGTAALYNDAVDDILGVEYMKAVNEAGIEPVDRPDVDLIQMEDGKELVFKAKVTVKPEVELGSYKGLEVEKTAAVVTDEELEQELQRKQEQHAKVLNLEEGTVQAQDTVNIDFAGSVDGVAFEGGTAEGYDLVIGSGSFIPGFEEQLIGAQIGQEVDVNVRFPDEYHVADLQGKDALFKVKVNKLKRKEYAPLDDEFAKDISEFETLDELKADLRDKLMTAAEQRAEMEQKNAIVAKAVENASVEIPEAMVNSRIDMMLDDMAQNLSYQGLDLETYCHYTGTSMDTMREELRPRASENLKTELVLEAIAKVEGITVSEEELNNELAKLAERYQTSPENLKQALMARGDMGMYRQSLVSEKTVNFLVEQA.

The PPIase FKBP-type domain maps to 163–248 (QDTVNIDFAG…VNKLKRKEYA (86 aa)).

The protein belongs to the FKBP-type PPIase family. Tig subfamily.

It localises to the cytoplasm. The catalysed reaction is [protein]-peptidylproline (omega=180) = [protein]-peptidylproline (omega=0). Its function is as follows. Involved in protein export. Acts as a chaperone by maintaining the newly synthesized protein in an open conformation. Functions as a peptidyl-prolyl cis-trans isomerase. This is Trigger factor 1 from Desulfitobacterium hafniense (strain Y51).